A 347-amino-acid polypeptide reads, in one-letter code: Probable magnetosome protein Mms36 (347 aa).

The helical transmembrane segment at 25–45 (VLVLYLAIAVVVAVLAWPWLA) threads the bilayer.

The protein resides in the magnetosome membrane. Its function is as follows. The 4 genes of this operon collectively influence magnetosome size and number. This chain is Probable magnetosome protein Mms36, found in Magnetospirillum gryphiswaldense (strain DSM 6361 / JCM 21280 / NBRC 15271 / MSR-1).